The following is a 330-amino-acid chain: Ferric enterobactin transport system permease protein FepG (330 aa).

The Periplasmic portion of the chain corresponds to methionine 1–arginine 7. Residues leucine 8–arginine 28 traverse the membrane as a helical segment. Residues serine 29–arginine 62 are Cytoplasmic-facing. The chain crosses the membrane as a helical span at residues valine 63 to leucine 83. The Periplasmic segment spans residues methionine 84–aspartate 92. Residues valine 93 to glutamine 113 form a helical membrane-spanning segment. Over aspartate 114–alanine 117 the chain is Cytoplasmic. A helical transmembrane segment spans residues isoleucine 118–tryptophan 138. The Periplasmic portion of the chain corresponds to arginine 139–arginine 146. Residues leucine 147–leucine 167 traverse the membrane as a helical segment. At lysine 168–tryptophan 190 the chain is on the cytoplasmic side. The helical transmembrane segment at alanine 191–valine 211 threads the bilayer. The Periplasmic segment spans residues arginine 212–arginine 235. The chain crosses the membrane as a helical span at residues leucine 236–isoleucine 256. The Cytoplasmic portion of the chain corresponds to serine 257–arginine 275. A helical transmembrane segment spans residues tryptophan 276–alanine 296. Over glutamine 297–tyrosine 303 the chain is Periplasmic. The helical transmembrane segment at glutamine 304–isoleucine 324 threads the bilayer. Topologically, residues glutamine 325 to lysine 330 are cytoplasmic.

This sequence belongs to the binding-protein-dependent transport system permease family. FecCD subfamily. In terms of assembly, the complex is composed of two ATP-binding proteins (FepC), two transmembrane proteins (FepD and FepG) and a solute-binding protein (FepB).

It localises to the cell inner membrane. Functionally, part of the ABC transporter complex FepBDGC involved in ferric enterobactin uptake. Responsible for the translocation of the substrate across the membrane. This is Ferric enterobactin transport system permease protein FepG (fepG) from Escherichia coli (strain K12).